Here is a 161-residue protein sequence, read N- to C-terminus: Regulator of ribonuclease activity A (161 aa).

It belongs to the RraA family. As to quaternary structure, homotrimer. Binds to both RNA-binding sites in the C-terminal region of Rne and to RhlB.

Its subcellular location is the cytoplasm. Globally modulates RNA abundance by binding to RNase E (Rne) and regulating its endonucleolytic activity. Can modulate Rne action in a substrate-dependent manner by altering the composition of the degradosome. Modulates RNA-binding and helicase activities of the degradosome. The protein is Regulator of ribonuclease activity A of Cronobacter sakazakii (strain ATCC BAA-894) (Enterobacter sakazakii).